The following is a 360-amino-acid chain: Phenylalanine--tRNA ligase alpha subunit (360 aa).

Residue E260 coordinates Mg(2+).

This sequence belongs to the class-II aminoacyl-tRNA synthetase family. Phe-tRNA synthetase alpha subunit type 1 subfamily. In terms of assembly, tetramer of two alpha and two beta subunits. Requires Mg(2+) as cofactor.

It localises to the cytoplasm. The enzyme catalyses tRNA(Phe) + L-phenylalanine + ATP = L-phenylalanyl-tRNA(Phe) + AMP + diphosphate + H(+). In Bartonella tribocorum (strain CIP 105476 / IBS 506), this protein is Phenylalanine--tRNA ligase alpha subunit.